The chain runs to 391 residues: MKEAVIVSGARTPVGKAKKGSLATVRPDDLGAICVKETLKRAGGYEGNIDDLIIGCATPEAEQGLNMARNIGALAGLPYTVPAITVNRYCSSGLQSIAYAAEKIMLGAYDTAIAGGAESMSQVPMMGHVTRPNLALAEKAPEYYMSMGHTAEQVAKKYGVSREDQDAFAVRSHQNAAKALAEGKFKDEIVPVEVTVTEIGEDHKPMEKQFVFSQDEGVRPQTTADILSTLRPAFSVDGTVTAGNSSQTSDGAAAVMLMDREKADALGLAPLVKFRSFAVGGVPPEVMGIGPVEAIPRALKLAGLQLQDIGLFELNEAFASQAIQVIRELGIDEEKVNVNGGAIALGHPLGCTGTKLTLSLIHEMKRRNEQFGVVTMCIGGGMGAAGVFELC.

Cys-90 (acyl-thioester intermediate) is an active-site residue. Active-site proton acceptor residues include His-347 and Cys-377.

Belongs to the thiolase-like superfamily. Thiolase family.

The catalysed reaction is an acyl-CoA + acetyl-CoA = a 3-oxoacyl-CoA + CoA. It functions in the pathway lipid metabolism; fatty acid beta-oxidation. Involved in the degradation of long-chain fatty acids. In Bacillus subtilis (strain 168), this protein is 3-ketoacyl-CoA thiolase (fadA).